Here is a 324-residue protein sequence, read N- to C-terminus: Phosphate transport system permease protein PstC 2 (324 aa).

6 helical membrane-spanning segments follow: residues 30-50, 90-110, 125-145, 174-194, 237-257, and 290-310; these read ASAAGSTIVIAILLIAIFLLV, LSSITALVLAVPVAVGIAVFL, MVDLLAAVPSIIFGLWGIFVL, AGGGTIFTAGIVLSVMILPIV, VAASMLGLGRALGETVAVLVI, and PLPTGAYISAGFALFVLTFLV. In terms of domain architecture, ABC transmembrane type-1 spans 85 to 314; sequence FMVTALSSIT…VLTFLVNAAA (230 aa).

It belongs to the binding-protein-dependent transport system permease family. CysTW subfamily.

It localises to the cell membrane. Its function is as follows. Part of the binding-protein-dependent transport system for phosphate; probably responsible for the translocation of the substrate across the membrane. In Mycobacterium bovis (strain ATCC BAA-935 / AF2122/97), this protein is Phosphate transport system permease protein PstC 2 (pstC2).